We begin with the raw amino-acid sequence, 90 residues long: Large ribosomal subunit protein uL23c (90 aa).

This sequence belongs to the universal ribosomal protein uL23 family. Part of the 50S ribosomal subunit.

It is found in the plastid. Its subcellular location is the chloroplast. Binds to 23S rRNA. This chain is Large ribosomal subunit protein uL23c (rpl23), found in Tetradesmus obliquus (Green alga).